The following is a 359-amino-acid chain: Sulfate/thiosulfate import ATP-binding protein CysA (359 aa).

In terms of domain architecture, ABC transporter spans 3–237; the sequence is VRVAGVRKEF…PNSPFVYGFI (235 aa). 35–42 contacts ATP; the sequence is GPSGSGKT.

Belongs to the ABC transporter superfamily. Sulfate/tungstate importer (TC 3.A.1.6) family. In terms of assembly, the complex is composed of two ATP-binding proteins (CysA), two transmembrane proteins (CysT and CysW) and a solute-binding protein (CysP).

The protein localises to the cell inner membrane. It carries out the reaction sulfate(out) + ATP + H2O = sulfate(in) + ADP + phosphate + H(+). The catalysed reaction is thiosulfate(out) + ATP + H2O = thiosulfate(in) + ADP + phosphate + H(+). Its function is as follows. Part of the ABC transporter complex CysAWTP involved in sulfate/thiosulfate import. Responsible for energy coupling to the transport system. In Brucella melitensis biotype 1 (strain ATCC 23456 / CCUG 17765 / NCTC 10094 / 16M), this protein is Sulfate/thiosulfate import ATP-binding protein CysA.